Consider the following 250-residue polypeptide: Probable transcriptional regulatory protein Cpha266_0538 (250 aa).

Belongs to the TACO1 family.

The protein resides in the cytoplasm. This Chlorobium phaeobacteroides (strain DSM 266 / SMG 266 / 2430) protein is Probable transcriptional regulatory protein Cpha266_0538.